A 239-amino-acid polypeptide reads, in one-letter code: Ribosomal RNA small subunit methyltransferase G (239 aa).

Residues Gly78, Phe83, 129-130 (AE), and Arg148 contribute to the S-adenosyl-L-methionine site.

Belongs to the methyltransferase superfamily. RNA methyltransferase RsmG family.

Its subcellular location is the cytoplasm. Functionally, specifically methylates the N7 position of a guanine in 16S rRNA. In Desulfitobacterium hafniense (strain Y51), this protein is Ribosomal RNA small subunit methyltransferase G.